The primary structure comprises 714 residues: Fumarate reductase flavoprotein subunit (714 aa).

FAD contacts are provided by residues 13–16, 42–44, and 49–50; these read GGLA, SHS, and GG. H43 carries the tele-8alpha-FAD histidine modification. Catalysis depends on residues H257 and R273. Residues E420 and 436 to 437 contribute to the FAD site; that span reads SV.

The protein belongs to the FAD-dependent oxidoreductase 2 family. FRD/SDH subfamily. Part of an enzyme complex containing three subunits: a flavoprotein (frdA), an iron-sulfur protein (frdB), and diheme cytochrome b (frdC). FAD is required as a cofactor.

It is found in the cell inner membrane. It catalyses the reaction a quinone + succinate = fumarate + a quinol. In terms of biological role, the fumarate reductase enzyme complex is required for fumarate respiration. This chain is Fumarate reductase flavoprotein subunit (frdA), found in Helicobacter pylori (strain J99 / ATCC 700824) (Campylobacter pylori J99).